A 329-amino-acid chain; its full sequence is Phenylalanine--tRNA ligase alpha subunit (329 aa).

Glu-253 is a binding site for Mg(2+).

The protein belongs to the class-II aminoacyl-tRNA synthetase family. Phe-tRNA synthetase alpha subunit type 1 subfamily. As to quaternary structure, tetramer of two alpha and two beta subunits. Mg(2+) serves as cofactor.

It is found in the cytoplasm. The enzyme catalyses tRNA(Phe) + L-phenylalanine + ATP = L-phenylalanyl-tRNA(Phe) + AMP + diphosphate + H(+). This chain is Phenylalanine--tRNA ligase alpha subunit, found in Teredinibacter turnerae (strain ATCC 39867 / T7901).